The primary structure comprises 298 residues: N-acetylmuramic acid 6-phosphate etherase (298 aa).

Residues 55–218 enclose the SIS domain; the sequence is IHAQVSGGGR…STGLMIKSGK (164 aa). Glu83 acts as the Proton donor in catalysis. The active site involves Glu114.

The protein belongs to the GCKR-like family. MurNAc-6-P etherase subfamily. Homodimer.

The enzyme catalyses N-acetyl-D-muramate 6-phosphate + H2O = N-acetyl-D-glucosamine 6-phosphate + (R)-lactate. It functions in the pathway amino-sugar metabolism; 1,6-anhydro-N-acetylmuramate degradation. The protein operates within amino-sugar metabolism; N-acetylmuramate degradation. It participates in cell wall biogenesis; peptidoglycan recycling. Its function is as follows. Specifically catalyzes the cleavage of the D-lactyl ether substituent of MurNAc 6-phosphate, producing GlcNAc 6-phosphate and D-lactate. Together with AnmK, is also required for the utilization of anhydro-N-acetylmuramic acid (anhMurNAc) either imported from the medium or derived from its own cell wall murein, and thus plays a role in cell wall recycling. The chain is N-acetylmuramic acid 6-phosphate etherase from Escherichia fergusonii (strain ATCC 35469 / DSM 13698 / CCUG 18766 / IAM 14443 / JCM 21226 / LMG 7866 / NBRC 102419 / NCTC 12128 / CDC 0568-73).